Here is a 268-residue protein sequence, read N- to C-terminus: MDNMLLAFLLTLFAGLATGVGSLIAFMAKTTNTKFLSFALGLSAGVMIYVSMVDIFFKAKDALTAYLGDTQGYWLTVIAFFGGMLLIGFIDRFIPKYTNPHEVKKVEDMKKPHQPLRDPDLMKMGLFTALALAIHNFPEGIATFVSTLHDPSIGLAIAIAVAIHNIPEGIAVSVPIYYATGDRKKAFKYSFLSGLAEPLGAIVAILILMPFLNDLMFGIIFAMVAGIMVFISLDELLPAARKYDEAHMSMYGVISGMALMAVSLLLLA.

Helical transmembrane passes span 6 to 26 (LAFLLTLFAGLATGVGSLIAF), 37 to 57 (SFALGLSAGVMIYVSMVDIFF), 70 to 90 (TQGYWLTVIAFFGGMLLIGFI), 125 to 145 (GLFTALALAIHNFPEGIATFV), and 152 to 172 (SIGLAIAIAVAIHNIPEGIAV). 2 residues coordinate Fe(2+): asparagine 136 and glutamate 139. Zn(2+) contacts are provided by glutamate 139 and histidine 164. Positions 165, 168, and 197 each coordinate Fe(2+). Zn(2+) is bound at residue glutamate 168. A run of 2 helical transmembrane segments spans residues 201–221 (AIVAILILMPFLNDLMFGIIF) and 248–268 (MSMYGVISGMALMAVSLLLLA).

The protein belongs to the ZIP transporter (TC 2.A.5) family. ZupT subfamily.

The protein localises to the cell membrane. It carries out the reaction Zn(2+)(in) = Zn(2+)(out). Mediates zinc uptake. May also transport other divalent cations. The protein is Zinc transporter ZupT of Oceanobacillus iheyensis (strain DSM 14371 / CIP 107618 / JCM 11309 / KCTC 3954 / HTE831).